Reading from the N-terminus, the 123-residue chain is UPF0738 protein BCG9842_B4089 (123 aa).

This sequence belongs to the UPF0738 family.

The protein is UPF0738 protein BCG9842_B4089 of Bacillus cereus (strain G9842).